The following is a 332-amino-acid chain: Holliday junction branch migration complex subunit RuvB (332 aa).

The segment at 1–181 (MSRILDNEMM…FGITGHMEYY (181 aa)) is large ATPase domain (RuvB-L). Residues Leu-20, Arg-21, Gly-62, Lys-65, Thr-66, Thr-67, 128–130 (EDF), Arg-171, Tyr-181, and Arg-218 contribute to the ATP site. Mg(2+) is bound at residue Thr-66. Residues 182–252 (AHADLTEIVE…ITDKALTMLD (71 aa)) form a small ATPAse domain (RuvB-S) region. Residues 255-332 (HEGLDYVDQK…EHLGYEYSEK (78 aa)) form a head domain (RuvB-H) region. DNA-binding residues include Arg-291, Arg-310, Arg-312, and Arg-315.

Belongs to the RuvB family. Homohexamer. Forms an RuvA(8)-RuvB(12)-Holliday junction (HJ) complex. HJ DNA is sandwiched between 2 RuvA tetramers; dsDNA enters through RuvA and exits via RuvB. An RuvB hexamer assembles on each DNA strand where it exits the tetramer. Each RuvB hexamer is contacted by two RuvA subunits (via domain III) on 2 adjacent RuvB subunits; this complex drives branch migration. In the full resolvosome a probable DNA-RuvA(4)-RuvB(12)-RuvC(2) complex forms which resolves the HJ.

The protein resides in the cytoplasm. It carries out the reaction ATP + H2O = ADP + phosphate + H(+). Its function is as follows. The RuvA-RuvB-RuvC complex processes Holliday junction (HJ) DNA during genetic recombination and DNA repair, while the RuvA-RuvB complex plays an important role in the rescue of blocked DNA replication forks via replication fork reversal (RFR). RuvA specifically binds to HJ cruciform DNA, conferring on it an open structure. The RuvB hexamer acts as an ATP-dependent pump, pulling dsDNA into and through the RuvAB complex. RuvB forms 2 homohexamers on either side of HJ DNA bound by 1 or 2 RuvA tetramers; 4 subunits per hexamer contact DNA at a time. Coordinated motions by a converter formed by DNA-disengaged RuvB subunits stimulates ATP hydrolysis and nucleotide exchange. Immobilization of the converter enables RuvB to convert the ATP-contained energy into a lever motion, pulling 2 nucleotides of DNA out of the RuvA tetramer per ATP hydrolyzed, thus driving DNA branch migration. The RuvB motors rotate together with the DNA substrate, which together with the progressing nucleotide cycle form the mechanistic basis for DNA recombination by continuous HJ branch migration. Branch migration allows RuvC to scan DNA until it finds its consensus sequence, where it cleaves and resolves cruciform DNA. The sequence is that of Holliday junction branch migration complex subunit RuvB from Streptococcus pneumoniae serotype 19F (strain G54).